Consider the following 61-residue polypeptide: UPF0434 protein PST_2635 (61 aa).

This sequence belongs to the UPF0434 family.

This chain is UPF0434 protein PST_2635, found in Stutzerimonas stutzeri (strain A1501) (Pseudomonas stutzeri).